The sequence spans 248 residues: 3-deoxy-manno-octulosonate cytidylyltransferase (248 aa).

It belongs to the KdsB family.

It localises to the cytoplasm. It carries out the reaction 3-deoxy-alpha-D-manno-oct-2-ulosonate + CTP = CMP-3-deoxy-beta-D-manno-octulosonate + diphosphate. The protein operates within nucleotide-sugar biosynthesis; CMP-3-deoxy-D-manno-octulosonate biosynthesis; CMP-3-deoxy-D-manno-octulosonate from 3-deoxy-D-manno-octulosonate and CTP: step 1/1. It participates in bacterial outer membrane biogenesis; lipopolysaccharide biosynthesis. Its function is as follows. Activates KDO (a required 8-carbon sugar) for incorporation into bacterial lipopolysaccharide in Gram-negative bacteria. This is 3-deoxy-manno-octulosonate cytidylyltransferase from Enterobacter sp. (strain 638).